Reading from the N-terminus, the 377-residue chain is tRNA pseudouridine synthase B (377 aa).

Aspartate 53 acts as the Nucleophile in catalysis.

The protein belongs to the pseudouridine synthase TruB family. Type 1 subfamily.

The enzyme catalyses uridine(55) in tRNA = pseudouridine(55) in tRNA. Its function is as follows. Responsible for synthesis of pseudouridine from uracil-55 in the psi GC loop of transfer RNAs. In Tropheryma whipplei (strain Twist) (Whipple's bacillus), this protein is tRNA pseudouridine synthase B.